The sequence spans 440 residues: D-serine dehydratase (440 aa).

At Lys116 the chain carries N6-(pyridoxal phosphate)lysine.

It belongs to the serine/threonine dehydratase family. DsdA subfamily. As to quaternary structure, monomer. Pyridoxal 5'-phosphate serves as cofactor.

The enzyme catalyses D-serine = pyruvate + NH4(+). The sequence is that of D-serine dehydratase from Salmonella dublin (strain CT_02021853).